A 208-amino-acid polypeptide reads, in one-letter code: Frataxin, mitochondrial (208 aa).

The N-terminal 40 residues, 1 to 40 (MWTFGRRAAAGLLPRTASRASAWVRNPRGRERIGTCGRRG), are a transit peptide targeting the mitochondrion.

It belongs to the frataxin family. Component of the mitochondrial core iron-sulfur cluster (ISC) complex composed of NFS1, LYRM4, NDUFAB1, ISCU, FXN, and FDX2; this complex is a heterohexamer containing two copies of each monomer. Homodimer. Monomer (probable predominant form). Oligomer. Monomers and polymeric aggregates of &gt;1 MDa have been isolated from mitochondria. A small fraction of heterologous overexpressed recombinant frataxin forms high-molecular weight aggregates that incorporate iron. Interacts with LYRM4. Interacts (via ferrous form) with ISCU; the interaction is possible when both are bound to the dimeric form of the cysteine desulfurase complex (NFS1:LYRM4) and the interaction enhances FXN interaction to the dimeric form of the cysteine desulfurase complex (NFS1:LYRM4). Interacts with FECH; one iron-bound FXN monomer seems to interact with a FECH homodimer. Interacts with SDHA and SDHB. Interacts with ACO2; the interaction is dependent on citrate. Interacts with HSPA9. As to quaternary structure, interacts with ACO1. Interacts with ISCU (cytoplasmic form). Post-translationally, processed in two steps by mitochondrial processing peptidase (MPP). MPP first cleaves the precursor to intermediate form and subsequently converts the intermediate to yield frataxin mature form (frataxin(81-210)) which is the predominant form. The additional forms, frataxin(56-210) and frataxin(78-210), seem to be produced when the normal maturation process is impaired; their physiological relevance is unsure.

It is found in the mitochondrion. It localises to the cytoplasm. The protein localises to the cytosol. It carries out the reaction 4 Fe(2+) + O2 + 4 H(+) = 4 Fe(3+) + 2 H2O. Functionally, functions as an activator of persulfide transfer to the scaffoding protein ISCU as component of the core iron-sulfur cluster (ISC) assembly complex and participates to the [2Fe-2S] cluster assembly. Accelerates sulfur transfer from NFS1 persulfide intermediate to ISCU and to small thiols such as L-cysteine and glutathione leading to persulfuration of these thiols and ultimately sulfide release. Binds ferrous ion and is released from FXN upon the addition of both L-cysteine and reduced FDX2 during [2Fe-2S] cluster assembly. The core iron-sulfur cluster (ISC) assembly complex is involved in the de novo synthesis of a [2Fe-2S] cluster, the first step of the mitochondrial iron-sulfur protein biogenesis. This process is initiated by the cysteine desulfurase complex (NFS1:LYRM4:NDUFAB1) that produces persulfide which is delivered on the scaffold protein ISCU in a FXN-dependent manner. Then this complex is stabilized by FDX2 which provides reducing equivalents to accomplish the [2Fe-2S] cluster assembly. Finally, the [2Fe-2S] cluster is transferred from ISCU to chaperone proteins, including HSCB, HSPA9 and GLRX5. May play a role in the protection against iron-catalyzed oxidative stress through its ability to catalyze the oxidation of Fe(2+) to Fe(3+); the oligomeric form but not the monomeric form has in vitro ferroxidase activity. May be able to store large amounts of iron in the form of a ferrihydrite mineral by oligomerization; however, the physiological relevance is unsure as reports are conflicting and the function has only been shown using heterologous overexpression systems. May function as an iron chaperone protein that protects the aconitase [4Fe-4S]2+ cluster from disassembly and promotes enzyme reactivation. May play a role as a high affinity iron binding partner for FECH that is capable of both delivering iron to ferrochelatase and mediating the terminal step in mitochondrial heme biosynthesis. Its function is as follows. Modulates the RNA-binding activity of ACO1. May be involved in the cytoplasmic iron-sulfur protein biogenesis. May contribute to oxidative stress resistance and overall cell survival. This is Frataxin, mitochondrial from Rattus norvegicus (Rat).